The following is a 444-amino-acid chain: Adenylyltransferase and sulfurtransferase UBA4 (444 aa).

ATP contacts are provided by residues glycine 81, aspartate 102, 109–113 (SNLHR), lysine 126, and 170–171 (DT). 2 residues coordinate Zn(2+): cysteine 212 and cysteine 215. The Glycyl thioester intermediate; for adenylyltransferase activity role is filled by cysteine 229. Zn(2+)-binding residues include cysteine 290 and cysteine 293. The region spanning 343–442 (KTKPYVLLDV…YIDEINPSLP (100 aa)) is the Rhodanese domain. Cysteine 401 acts as the Cysteine persulfide intermediate; for sulfurtransferase activity in catalysis.

The protein in the N-terminal section; belongs to the HesA/MoeB/ThiF family. UBA4 subfamily. It depends on Zn(2+) as a cofactor.

The protein localises to the cytoplasm. It is found in the cytosol. It participates in tRNA modification; 5-methoxycarbonylmethyl-2-thiouridine-tRNA biosynthesis. Functionally, plays a central role in 2-thiolation of mcm(5)S(2)U at tRNA wobble positions of cytosolic tRNA(Lys), tRNA(Glu) and tRNA(Gln). Acts by mediating the C-terminal thiocarboxylation of sulfur carrier URM1. Its N-terminus first activates URM1 as acyl-adenylate (-COAMP), then the persulfide sulfur on the catalytic cysteine is transferred to URM1 to form thiocarboxylation (-COSH) of its C-terminus. The reaction probably involves hydrogen sulfide that is generated from the persulfide intermediate and that acts as a nucleophile towards URM1. Subsequently, a transient disulfide bond is formed. Does not use thiosulfate as sulfur donor; NFS1 probably acting as a sulfur donor for thiocarboxylation reactions. Prior mcm(5) tRNA modification by the elongator complex is required for 2-thiolation. May also be involved in protein urmylation. This is Adenylyltransferase and sulfurtransferase UBA4 from Kluyveromyces lactis (strain ATCC 8585 / CBS 2359 / DSM 70799 / NBRC 1267 / NRRL Y-1140 / WM37) (Yeast).